The primary structure comprises 298 residues: Protease HtpX (298 aa).

Helical transmembrane passes span 4–24 and 41–61; these read IALYLLTNLAVIVVASITLSL and TSLLIFSAVFGFAGSLISLLI. His-147 provides a ligand contact to Zn(2+). Residue Glu-148 is part of the active site. His-151 serves as a coordination point for Zn(2+). Transmembrane regions (helical) follow at residues 162 to 182 and 193 to 213; these read LIQGVVNTFVIFAARVVGYVI and GLGFGYYIVVIVTEIIFGIAA. Residue Glu-225 participates in Zn(2+) binding.

It belongs to the peptidase M48B family. It depends on Zn(2+) as a cofactor.

It localises to the cell inner membrane. This chain is Protease HtpX, found in Alcanivorax borkumensis (strain ATCC 700651 / DSM 11573 / NCIMB 13689 / SK2).